We begin with the raw amino-acid sequence, 315 residues long: Probable cell division protein WhiA (315 aa).

A DNA-binding region (H-T-H motif) is located at residues 278 to 312 (SLSDLAGMIEGQELTKSGINHRMRKLMQIVKELNH).

This sequence belongs to the WhiA family.

Its function is as follows. Involved in cell division and chromosome segregation. The sequence is that of Probable cell division protein WhiA from Oenococcus oeni (strain ATCC BAA-331 / PSU-1).